The primary structure comprises 309 residues: Protein FdhE (309 aa).

The protein belongs to the FdhE family.

The protein localises to the cytoplasm. Functionally, necessary for formate dehydrogenase activity. The sequence is that of Protein FdhE from Escherichia coli (strain K12 / MC4100 / BW2952).